The sequence spans 92 residues: Small ribosomal subunit protein uS19 (92 aa).

Belongs to the universal ribosomal protein uS19 family.

Protein S19 forms a complex with S13 that binds strongly to the 16S ribosomal RNA. The polypeptide is Small ribosomal subunit protein uS19 (Mycoplasmopsis synoviae (strain 53) (Mycoplasma synoviae)).